A 214-amino-acid chain; its full sequence is Ribosomal RNA large subunit methyltransferase E (214 aa).

S-adenosyl-L-methionine contacts are provided by Gly68, Trp70, Asp88, Asp104, and Asp129. The active-site Proton acceptor is the Lys169.

The protein belongs to the class I-like SAM-binding methyltransferase superfamily. RNA methyltransferase RlmE family.

Its subcellular location is the cytoplasm. The enzyme catalyses uridine(2552) in 23S rRNA + S-adenosyl-L-methionine = 2'-O-methyluridine(2552) in 23S rRNA + S-adenosyl-L-homocysteine + H(+). Specifically methylates the uridine in position 2552 of 23S rRNA at the 2'-O position of the ribose in the fully assembled 50S ribosomal subunit. The chain is Ribosomal RNA large subunit methyltransferase E from Magnetococcus marinus (strain ATCC BAA-1437 / JCM 17883 / MC-1).